The chain runs to 174 residues: Crossover junction endodeoxyribonuclease RuvC (174 aa).

Residues Asp-8, Glu-68, and Asp-140 contribute to the active site. Residues Asp-8, Glu-68, and Asp-140 each contribute to the Mg(2+) site.

This sequence belongs to the RuvC family. As to quaternary structure, homodimer which binds Holliday junction (HJ) DNA. The HJ becomes 2-fold symmetrical on binding to RuvC with unstacked arms; it has a different conformation from HJ DNA in complex with RuvA. In the full resolvosome a probable DNA-RuvA(4)-RuvB(12)-RuvC(2) complex forms which resolves the HJ. The cofactor is Mg(2+).

The protein localises to the cytoplasm. It catalyses the reaction Endonucleolytic cleavage at a junction such as a reciprocal single-stranded crossover between two homologous DNA duplexes (Holliday junction).. Functionally, the RuvA-RuvB-RuvC complex processes Holliday junction (HJ) DNA during genetic recombination and DNA repair. Endonuclease that resolves HJ intermediates. Cleaves cruciform DNA by making single-stranded nicks across the HJ at symmetrical positions within the homologous arms, yielding a 5'-phosphate and a 3'-hydroxyl group; requires a central core of homology in the junction. The consensus cleavage sequence is 5'-(A/T)TT(C/G)-3'. Cleavage occurs on the 3'-side of the TT dinucleotide at the point of strand exchange. HJ branch migration catalyzed by RuvA-RuvB allows RuvC to scan DNA until it finds its consensus sequence, where it cleaves and resolves the cruciform DNA. This Legionella pneumophila (strain Lens) protein is Crossover junction endodeoxyribonuclease RuvC.